Reading from the N-terminus, the 765-residue chain is Leucine-rich repeat and calponin homology domain-containing protein 2 (765 aa).

2 disordered regions span residues 1–39 (MAASQGGGGNSGGGGCGGGGSSGGCGTAGGGGGGAGGGG) and 55–76 (LFGQPFPNGPPWNPGSLQPQHT). 9 LRR repeats span residues 89-110 (SSGILSLSGRKLRDFPGSGYDL), 112-133 (DTTQADLSRNRFTEIPSDVWLF), 135-156 (PLETLNLYHNCIKTIPEAIKNL), 158-179 (MLTYLNISRNLLSTLPKYLFDL), 180-201 (PLKVLVVSNNKLVSIPEEIGKL), 203-224 (DLMELDISCNEIQVLPQQMGKL), 226-248 (SLRELNIRRNNLHVLPDELGDLP), 249-269 (LVKLDFSCNKVTEIPVCYRKL), and 271-292 (HLQVIILDNNPLQVPPAQICLK). Residues 316-401 (LDLPSLSKRM…GSKTDSQKDQ (86 aa)) are disordered. A compositionally biased stretch (basic and acidic residues) spans 378-388 (SNREQTSRNDS). A coiled-coil region spans residues 438–472 (SEKSRKNEELGDEKRLEKEQLLAEEEDDDLKEVTD). 2 disordered regions span residues 498-552 (RNKP…QSEE) and 565-628 (KYKS…EYGA). Over residues 503–512 (QTVECEKSVS) the composition is skewed to basic and acidic residues. Composition is skewed to polar residues over residues 518 to 529 (SPLSPLTWQPLE) and 584 to 595 (DNANMSTQSPVS). A Calponin-homology (CH) domain is found at 642–755 (LREEREQIRQ…VTVQALLELP (114 aa)).

In terms of biological role, may play a role in the organization of the cytoskeleton. The polypeptide is Leucine-rich repeat and calponin homology domain-containing protein 2 (LRCH2) (Homo sapiens (Human)).